The following is a 398-amino-acid chain: Yellow-related salivary protein SP04 (398 aa).

The N-terminal stretch at 1 to 18 (MKWFLFLLSTIFVQGILG) is a signal peptide. Residues 73–94 (TLTEIERKKHPERSPPLSKFSG) form a disordered region. The span at 75–85 (TEIERKKHPER) shows a compositional bias: basic and acidic residues.

The protein belongs to the major royal jelly protein family. Female salivary gland (at protein level).

Its subcellular location is the secreted. Functionally, probably modulates blood feeding of sand flies on vertebrate species by binding and sequestering different mediators involved in the host response. Binds biogenic amines. Binds serotonin with high affinity. Binds histamine with low affinity. The protein is Yellow-related salivary protein SP04 of Phlebotomus argentipes (Phlebotomine sand fly).